A 205-amino-acid polypeptide reads, in one-letter code: Large ribosomal subunit protein uL3 (205 aa).

This sequence belongs to the universal ribosomal protein uL3 family. As to quaternary structure, part of the 50S ribosomal subunit. Forms a cluster with proteins L14 and L19.

Functionally, one of the primary rRNA binding proteins, it binds directly near the 3'-end of the 23S rRNA, where it nucleates assembly of the 50S subunit. This chain is Large ribosomal subunit protein uL3, found in Bacteroides thetaiotaomicron (strain ATCC 29148 / DSM 2079 / JCM 5827 / CCUG 10774 / NCTC 10582 / VPI-5482 / E50).